Here is a 445-residue protein sequence, read N- to C-terminus: RNA pseudouridine synthase 2, chloroplastic (445 aa).

A chloroplast-targeting transit peptide spans 1–44 (MATTAAASPPAIATALSALLRRQRRRSSRCVGASHARCLAADAN). Residues 47-66 (AVAPSRRGGHGGTRLEEAVP) are disordered. The 76-residue stretch at 72-147 (SRIDAWISAR…IPLDIVYEDD (76 aa)) folds into the S4 RNA-binding domain. The active site involves Asp235.

Belongs to the pseudouridine synthase RluA family.

It localises to the plastid. The protein resides in the chloroplast. The enzyme catalyses a uridine in RNA = a pseudouridine in RNA. This is RNA pseudouridine synthase 2, chloroplastic from Oryza sativa subsp. japonica (Rice).